The primary structure comprises 611 residues: ANK repeat-containing protein nipk-1 (611 aa).

Positions 91–149 (NSKSKKKTENQETKEKDEEAEEKKDGPPKDDKELKMKKEKEQEDENAELDEQKKDGDLL) form a coiled coil. Disordered stretches follow at residues 92–167 (SKSK…SHPY), 212–255 (ISAS…DTSR), and 280–333 (TKEE…LSPR). Residues 97 to 131 (KTENQETKEKDEEAEEKKDGPPKDDKELKMKKEKE) show a composition bias toward basic and acidic residues. Polar residues-rich tracts occupy residues 212 to 223 (ISASTTPDTVLS), 239 to 255 (ESLQ…DTSR), and 315 to 333 (GTCS…LSPR). 5 ANK repeats span residues 375-405 (DGDT…TMNE), 417-446 (FGET…SPNS), 452-482 (VGDS…RVNE), 486-527 (DGQT…DPTI), and 532-561 (TGKT…EDTF).

It belongs to the iASPP family. As to expression, expressed in the nervous system.

Acts downstream of the receptor complex composed of ilcr-1 and ilcr-2, which is a signaling complex that modulates neuronal activity and animal behavior in response to sensory neuron input. Mediates signaling of the complex. This is ANK repeat-containing protein nipk-1 from Caenorhabditis elegans.